We begin with the raw amino-acid sequence, 324 residues long: Tyrosine--tRNA ligase (324 aa).

Residue Tyr-36 participates in L-tyrosine binding. Residues Pro-41–His-49 carry the 'HIGH' region motif. The L-tyrosine site is built by Tyr-158, Gln-162, Asp-165, and Gln-180. The 'KMSKS' region signature appears at Lys-215–Ser-219. Ser-218 lines the ATP pocket.

It belongs to the class-I aminoacyl-tRNA synthetase family. TyrS type 3 subfamily. As to quaternary structure, homodimer.

The protein localises to the cytoplasm. It catalyses the reaction tRNA(Tyr) + L-tyrosine + ATP = L-tyrosyl-tRNA(Tyr) + AMP + diphosphate + H(+). Catalyzes the attachment of tyrosine to tRNA(Tyr) in a two-step reaction: tyrosine is first activated by ATP to form Tyr-AMP and then transferred to the acceptor end of tRNA(Tyr). In Methanopyrus kandleri (strain AV19 / DSM 6324 / JCM 9639 / NBRC 100938), this protein is Tyrosine--tRNA ligase.